Consider the following 252-residue polypeptide: Ubiquinone biosynthesis protein COQ4 homolog 1, mitochondrial (252 aa).

Residues histidine 130, aspartate 131, histidine 134, and glutamate 146 each coordinate Zn(2+).

This sequence belongs to the COQ4 family. Component of a multi-subunit COQ enzyme complex. Zn(2+) serves as cofactor.

The protein resides in the mitochondrion inner membrane. The enzyme catalyses a 4-hydroxy-3-methoxy-5-(all-trans-polyprenyl)benzoate + H(+) = a 2-methoxy-6-(all-trans-polyprenyl)phenol + CO2. The protein operates within cofactor biosynthesis; ubiquinone biosynthesis. Lyase that catalyzes the C1-decarboxylation of 4-hydroxy-3-methoxy-5-(all-trans-polyprenyl)benzoic acid into 2-methoxy-6-(all-trans-polyprenyl)phenol during ubiquinone biosynthesis. This is Ubiquinone biosynthesis protein COQ4 homolog 1, mitochondrial from Trypanosoma cruzi (strain CL Brener).